Consider the following 156-residue polypeptide: ATP synthase subunit b (156 aa).

The helical transmembrane segment at 7–26 (LIGQAIWFALFIWITMKYVW) threads the bilayer.

This sequence belongs to the ATPase B chain family. As to quaternary structure, F-type ATPases have 2 components, F(1) - the catalytic core - and F(0) - the membrane proton channel. F(1) has five subunits: alpha(3), beta(3), gamma(1), delta(1), epsilon(1). F(0) has three main subunits: a(1), b(2) and c(10-14). The alpha and beta chains form an alternating ring which encloses part of the gamma chain. F(1) is attached to F(0) by a central stalk formed by the gamma and epsilon chains, while a peripheral stalk is formed by the delta and b chains.

It is found in the cell inner membrane. F(1)F(0) ATP synthase produces ATP from ADP in the presence of a proton or sodium gradient. F-type ATPases consist of two structural domains, F(1) containing the extramembraneous catalytic core and F(0) containing the membrane proton channel, linked together by a central stalk and a peripheral stalk. During catalysis, ATP synthesis in the catalytic domain of F(1) is coupled via a rotary mechanism of the central stalk subunits to proton translocation. In terms of biological role, component of the F(0) channel, it forms part of the peripheral stalk, linking F(1) to F(0). The chain is ATP synthase subunit b from Dechloromonas aromatica (strain RCB).